The following is a 350-amino-acid chain: Cilia- and flagella-associated protein 36 (350 aa).

Residues 142 to 167 (SELEQQEMKILQEVLRRSKEEYDLQM) are a coiled coil. 2 disordered regions span residues 171–233 (GLGS…ATTA) and 301–337 (RQTG…QKRK). The segment covering 177–220 (LASTSSSVSETPQNPEQRLSNGVSDPLTLTQPDSEMEESSTATQ) has biased composition (polar residues). Positions 280 to 350 (VALQQRSEYL…EKLKEEVIKK (71 aa)) form a coiled coil.

It belongs to the CFAP36 family.

It is found in the nucleus. The protein resides in the cytoplasm. Its subcellular location is the cell projection. It localises to the cilium. The protein localises to the flagellum. The sequence is that of Cilia- and flagella-associated protein 36 from Danio rerio (Zebrafish).